Here is a 550-residue protein sequence, read N- to C-terminus: Sterol O-acyltransferase 1 (550 aa).

At Met-1 the chain carries N-acetylmethionine. The disordered stretch occupies residues 1–36; it reads MVGEEKMSLRNRLSKSRENPEEDEDQRKPAKESLEA. Residues 1–138 lie on the Cytoplasmic side of the membrane; it reads MVGEEKMSLR…LDELLEVDHI (138 aa). Residue Ser-8 is modified to Phosphoserine. Basic and acidic residues predominate over residues 15-34; the sequence is KSRENPEEDEDQRKPAKESL. His-137 lines the cholesterol pocket. A helical transmembrane segment spans residues 139–160; that stretch reads RTIYHMFIALLILFILSTLVVD. Residues 161–180 are Lumenal-facing; it reads YIDEGRLVLEFSLLSYAFGK. A helical membrane pass occupies residues 181 to 206; sequence FPTVVWTWWIMFLSTFSVPYFLFQRW. Residues 207–218 are Cytoplasmic-facing; the sequence is ATGYSKSSHPLI. A helical transmembrane segment spans residues 219–244; sequence NSLFHGFLFMVFQIGILGFGPTYVVL. The Lumenal portion of the chain corresponds to 245-252; sequence AYTLPPAS. A helical membrane pass occupies residues 253–276; the sequence is RFIIIFEQIRFVMKAHSFVRENVP. Residues 277-319 are Cytoplasmic-facing; sequence RVLNSAKEKSSTVPIPTVNQYLYFLFAPTLIYRDSYPRNPTVR. Residues 320-352 form a helical membrane-spanning segment; that stretch reads WGYVAMQFAQVFGCFFYVYYIFERLCAPLFRNI. At 353–369 the chain is on the lumenal side; it reads KQEPFSARVLVLCVFNS. Residues 370 to 395 traverse the membrane as a helical segment; sequence ILPGVLILFLTFFAFLHCWLNAFAEM. Topologically, residues 396–443 are cytoplasmic; it reads LRFGDRMFYKDWWNSTSYSNYYRTWNVVVHDWLYYYAYKDFLWFFSKR. Positions 403 to 409 match the FYXDWWN motif motif; it reads FYKDWWN. An acyl-CoA contacts are provided by Asn-415, Arg-418, Asn-421, His-425, Tyr-433, Lys-445, and Ser-456. A helical membrane pass occupies residues 444 to 468; that stretch reads FKSAAMLAVFAVSAVVHEYALAVCL. His-460 is an active-site residue. Residues 469-474 lie on the Lumenal side of the membrane; the sequence is SFFYPV. A helical membrane pass occupies residues 475–490; it reads LFVLFMFFGMAFNFIV. Topologically, residues 491–496 are cytoplasmic; it reads NDSRKK. Residues 497-528 traverse the membrane as a helical segment; that stretch reads PIWNVMMWTSLFLGNGVLLCFYSQEWYARQHC. A disulfide bridge links Cys-528 with Cys-546. The Lumenal portion of the chain corresponds to 529 to 550; sequence PLKNPTFLDYVRPRSWTCRYVF.

The protein belongs to the membrane-bound acyltransferase family. Sterol o-acyltransferase subfamily. May form homo- or heterodimers. Interacts with UBIAD1. In terms of tissue distribution, expressed in most tissues, but most strongly in the adrenal gland. Expressed more strongly in liver Kupffer cells than in hepatocytes.

It is found in the endoplasmic reticulum membrane. It carries out the reaction a sterol + a long-chain fatty acyl-CoA = a long-chain 3-hydroxysterol ester + CoA. It catalyses the reaction cholesterol + an acyl-CoA = a cholesterol ester + CoA. The enzyme catalyses cholesterol + (9Z)-octadecenoyl-CoA = cholesteryl (9Z-octadecenoate) + CoA. The catalysed reaction is cholesterol + hexadecanoyl-CoA = cholesteryl hexadecanoate + CoA. It carries out the reaction octadecanoyl-CoA + cholesterol = cholesteryl octadecanoate + CoA. It catalyses the reaction (9Z,12Z)-octadecadienoyl-CoA + cholesterol = cholesteryl (9Z,12Z)-octadecadienoate + CoA. The enzyme catalyses (5Z,8Z,11Z,14Z)-eicosatetraenoyl-CoA + cholesterol = cholesteryl (5Z,8Z,11Z,14Z)-eicosatetraenoate + CoA. The catalysed reaction is (9Z)-hexadecenoyl-CoA + cholesterol = cholesteryl (9Z)-hexadecenoate + CoA. It carries out the reaction (11Z)-octadecenoyl-CoA + cholesterol = cholesteryl (11Z)-octadecenoate + CoA. It catalyses the reaction (7Z)-octadecenoyl-CoA + cholesterol = cholesteryl (7Z)-octadecenoate + CoA. Catalyzes the formation of fatty acid-cholesterol esters, which are less soluble in membranes than cholesterol. Plays a role in lipoprotein assembly and dietary cholesterol absorption. Preferentially utilizes oleoyl-CoA ((9Z)-octadecenoyl-CoA) as a substrate: shows a higher activity towards an acyl-CoA substrate with a double bond at the delta-9 position (9Z) than towards saturated acyl-CoA or an unsaturated acyl-CoA with a double bond at the delta-7 (7Z) or delta-11 (11Z) positions. This is Sterol O-acyltransferase 1 (SOAT1) from Chlorocebus aethiops (Green monkey).